The primary structure comprises 165 residues: Photosystem I assembly protein Ycf3 (165 aa).

TPR repeat units follow at residues 32-65 (AFTY…EIDP), 69-102 (SYIL…NPFL), and 117-150 (GEQA…TPGN).

The protein belongs to the Ycf3 family.

Its subcellular location is the plastid. It is found in the chloroplast thylakoid membrane. Functionally, essential for the assembly of the photosystem I (PSI) complex. May act as a chaperone-like factor to guide the assembly of the PSI subunits. The sequence is that of Photosystem I assembly protein Ycf3 from Spinacia oleracea (Spinach).